Reading from the N-terminus, the 391-residue chain is DNA/RNA-binding protein KIN17 (391 aa).

A C2H2-type zinc finger spans residues Cys28–His50. Residues Gln51–Lys160 are winged helix-turn-helix (wHTH). Lys135 is modified (N6,N6,N6-trimethyllysine; by METTL22; alternate). Lys135 is modified (N6-methyllysine; alternate). 2 coiled-coil regions span residues Glu147–Gly180 and Ala252–Thr275. The interval Asn206–Ala258 is disordered. Positions Gly282–Thr332 are C-terminal subdomain A. The interval Gly338–Lys389 is C-terminal subdomain B.

Belongs to the KIN17 family. In terms of assembly, associated with DNA polymerase alpha, RFC1 and cyclin A, in multiprotein DNA replication complexes. Also associates with replication origins at the G1/S phase boundary and throughout the S phase in vivo. Highly expressed in transformed mouse AtT20 neuroendocrine cells. Expressed at a lower level in testis, kidney, skeletal muscle, liver, lung, spleen, brain and heart and kidney. In testis, expressed at much higher levels in proliferating cells than in differentiating cells. Not detected in embryo.

It is found in the nucleus. The protein localises to the cytoplasm. In terms of biological role, involved in DNA replication and the cellular response to DNA damage. May participate in DNA replication factories and create a bridge between DNA replication and repair mediated by high molecular weight complexes. May play a role in illegitimate recombination and regulation of gene expression. May participate in mRNA processing. Binds, in vitro, to double-stranded DNA. Also shown to bind preferentially to curved DNA in vitro and in vivo. Binds via its C-terminal domain to RNA in vitro. The sequence is that of DNA/RNA-binding protein KIN17 from Mus musculus (Mouse).